A 289-amino-acid chain; its full sequence is RKMAAAAVNGAAGFSSSGPAATSGAVLQAATGMYEQLKGEWNRKSPNLSKCGEELGRLKLVLLELNFLPTTGTKLTKQQLILARDILEIGAQWSILRKDIPSFERYMAQLKCYYFDYKEQLPESAYMHQLLGLNLLFLLSQNRVAEFHTELERLPAKDIQTNVYIKHPVSLEQYLMEGSYNKVFLAKGNIPAESYAFFIDILLDTIRDEIAGCIEKAYEKILFTEATRILFFNTPKKMTDYAKKRGWVLGPNNYYSFASQQQKPEDTTIPSTELAKQVIEYARQLEMIV.

Ser45 bears the Phosphoserine mark. The PCI domain occupies 101–270; the sequence is PSFERYMAQL…QQKPEDTTIP (170 aa). A Glycyl lysine isopeptide (Lys-Gly) (interchain with G-Cter in SUMO2) cross-link involves residue Lys236.

It belongs to the proteasome subunit S14 family. In terms of assembly, component of the 19S proteasome regulatory particle complex. The 26S proteasome consists of a 20S core particle (CP) and two 19S regulatory subunits (RP). The regulatory particle is made of a lid composed of 9 subunits including PSMD8, a base containing 6 ATPases and few additional components. Interacts with DDI2. Interacts with TASOR.

Functionally, component of the 26S proteasome, a multiprotein complex involved in the ATP-dependent degradation of ubiquitinated proteins. This complex plays a key role in the maintenance of protein homeostasis by removing misfolded or damaged proteins, which could impair cellular functions, and by removing proteins whose functions are no longer required. Therefore, the proteasome participates in numerous cellular processes, including cell cycle progression, apoptosis, or DNA damage repair. The chain is 26S proteasome non-ATPase regulatory subunit 8 (PSMD8) from Pongo abelii (Sumatran orangutan).